We begin with the raw amino-acid sequence, 694 residues long: Heat shock protein homolog SSE1 (694 aa).

The segment at 671 to 694 (AQRSADSEAKKDATPEGDAQMDLD) is disordered. A compositionally biased stretch (basic and acidic residues) spans 675 to 684 (ADSEAKKDAT).

The protein belongs to the heat shock protein 70 family.

Its subcellular location is the cytoplasm. This chain is Heat shock protein homolog SSE1 (SSE1), found in Candida glabrata (strain ATCC 2001 / BCRC 20586 / JCM 3761 / NBRC 0622 / NRRL Y-65 / CBS 138) (Yeast).